Consider the following 355-residue polypeptide: Fructose-1,6-bisphosphatase class 1 (355 aa).

Residues Glu-94, Asp-116, Leu-118, and Asp-119 each contribute to the Mg(2+) site. Substrate contacts are provided by residues 119–122 (DGSS), Asn-211, and 263–265 (YLY). A Mg(2+)-binding site is contributed by Glu-283.

Belongs to the FBPase class 1 family. As to quaternary structure, homotetramer. Requires Mg(2+) as cofactor.

Its subcellular location is the cytoplasm. The enzyme catalyses beta-D-fructose 1,6-bisphosphate + H2O = beta-D-fructose 6-phosphate + phosphate. Its pathway is carbohydrate biosynthesis; Calvin cycle. The chain is Fructose-1,6-bisphosphatase class 1 from Rhodospirillum rubrum (strain ATCC 11170 / ATH 1.1.1 / DSM 467 / LMG 4362 / NCIMB 8255 / S1).